A 130-amino-acid chain; its full sequence is uncharacterized protein (130 aa).

Methionine 1 carries the N-acetylmethionine modification.

In terms of assembly, homotetramer.

This is an uncharacterized protein from Arabidopsis thaliana (Mouse-ear cress).